Reading from the N-terminus, the 226-residue chain is Glycerol-3-phosphate acyltransferase (226 aa).

Transmembrane regions (helical) follow at residues Met-1–Phe-21, Phe-60–Phe-80, Leu-102–Phe-122, Ile-134–Val-154, Ile-159–Leu-178, and Leu-182–Leu-197.

The protein belongs to the PlsY family. In terms of assembly, probably interacts with PlsX.

The protein resides in the cell inner membrane. The catalysed reaction is an acyl phosphate + sn-glycerol 3-phosphate = a 1-acyl-sn-glycero-3-phosphate + phosphate. Its pathway is lipid metabolism; phospholipid metabolism. In terms of biological role, catalyzes the transfer of an acyl group from acyl-phosphate (acyl-PO(4)) to glycerol-3-phosphate (G3P) to form lysophosphatidic acid (LPA). This enzyme utilizes acyl-phosphate as fatty acyl donor, but not acyl-CoA or acyl-ACP. In Nostoc sp. (strain PCC 7120 / SAG 25.82 / UTEX 2576), this protein is Glycerol-3-phosphate acyltransferase.